Consider the following 337-residue polypeptide: Major outer membrane protein P.IB (337 aa).

An N-terminal signal peptide occupies residues 1–19; the sequence is MKKSLIALTLAALPVAAMA.

Belongs to the Gram-negative porin family. As to quaternary structure, homotrimer.

It is found in the cell outer membrane. Functionally, serves as a slightly cation selective porin. The polypeptide is Major outer membrane protein P.IB (por) (Neisseria lactamica).